A 307-amino-acid chain; its full sequence is Aquaporin Lacbi1:387054 (307 aa).

Topologically, residues 1-40 are cytoplasmic; that stretch reads MSNAPLVHLSDLQKRLRVFAVWEKVRNDGKVHWAIECFAE. A helical transmembrane segment spans residues 41-61; that stretch reads MFGVFLYVYFGLGSTAGWVIG. Topologically, residues 62–68 are extracellular; that stretch reads NIIKETN. Residues 69–89 form a helical membrane-spanning segment; sequence LSSILQIGLAYAFGIWFAIGL. Topologically, residues 90 to 120 are cytoplasmic; sequence CSSSSGGHFNPCVTLSFVVFKGFPKLKACRY. An NPA 1 motif is present at residues 99 to 101; that stretch reads NPC. A helical membrane pass occupies residues 121 to 141; that stretch reads IIAQILGAYIASALVYSQWNV. Residues 142-157 lie on the Extracellular side of the membrane; sequence LIEECTLGLIKAKAYD. Residues 158 to 178 traverse the membrane as a helical segment; it reads TTMFTPNGPAGIFALYLVPGA. The NPA 2 motif lies at 167 to 169; that stretch reads AGI. Over 179–183 the chain is Cytoplasmic; sequence QSVPR. A helical transmembrane segment spans residues 184-203; that stretch reads ALLNEFVNSTLIGMIIWAAL. Over 204–216 the chain is Extracellular; sequence DPTNMMVPPAMGP. Residues 217-237 traverse the membrane as a helical segment; that stretch reads LFISLAYAAVIWGFATPAVAL. Topologically, residues 238-264 are cytoplasmic; sequence NTARDLGARLFAMSIWGTKAAGSGYSA. The helical transmembrane segment at 265–285 threads the bilayer; that stretch reads IACLINIPATLLGVFLYEVFF. The Extracellular segment spans residues 286–307; the sequence is TDSDRGKLLPILNGKKLKHIFS.

It belongs to the MIP/aquaporin (TC 1.A.8) family.

It localises to the membrane. The catalysed reaction is H2O(in) = H2O(out). The enzyme catalyses NH4(+)(in) = NH4(+)(out). It carries out the reaction urea(in) = urea(out). It catalyses the reaction glycerol(in) = glycerol(out). Functionally, water channel required to facilitate the transport of water across membranes. In addition to water, also shows strong ammonium transport activity. Also enables low but statistically significant glycerol and urea permeability. May be involved in fungal nitrogen (ammonium) support of the plant host in symbiosis. The protein is Aquaporin Lacbi1:387054 of Laccaria bicolor (strain S238N-H82 / ATCC MYA-4686) (Bicoloured deceiver).